Reading from the N-terminus, the 759-residue chain is DNA topoisomerase 3 (759 aa).

The Toprim domain maps to 3–147 (RALFVAEKND…RLDIFRARFS (145 aa)). Residues 165 to 590 (DEKTVAAVDC…EQIGKYRAIF (426 aa)) form the Topo IA-type catalytic domain. Catalysis depends on Y334, which acts as the O-(5'-phospho-DNA)-tyrosine intermediate. Residues 609–715 (DKNNQAGGGP…KEQEEEEEVF (107 aa)) form a disordered region. Residues 614–639 (AGGGPGGPGGGGGPPRGPGGGGGGGP) are compositionally biased toward gly residues. Positions 640-649 (TGPPAPPKPP) are enriched in pro residues. Zn(2+)-binding residues include C716, C718, C743, and C753. The GRF-type zinc-finger motif lies at 716–759 (CQCPEPMRAVTKVVQKEGPNKGKKFYTCSLPYTSSEKCNFFKWA).

Belongs to the type IA topoisomerase family. As to quaternary structure, component of the BTR double Holliday Junction dissolution complex composed of at least him-6, top-3, rmh-1 and rmif-2, which is involved in double strand break repair in the germline. May interact with rmh-1.

The protein resides in the nucleus. It catalyses the reaction ATP-independent breakage of single-stranded DNA, followed by passage and rejoining.. Its function is as follows. Component of the BTR double Holliday Junction dissolution complex, which is involved in homologous recombination during meiotic double strand break in the germline. Releases the supercoiling and torsional tension of DNA introduced during the DNA replication and transcription by transiently cleaving and rejoining one strand of the DNA duplex. Introduces a single-strand break via transesterification at a target site in duplex DNA. The scissile phosphodiester is attacked by the catalytic tyrosine of the enzyme, resulting in the formation of a DNA-(5'-phosphotyrosyl)-enzyme intermediate and the expulsion of a 3'-OH DNA strand. The free DNA strand than undergoes passage around the unbroken strand thus removing DNA supercoils. Finally, in the religation step, the DNA 3'-OH attacks the covalent intermediate to expel the active-site tyrosine and restore the DNA phosphodiester backbone. This is DNA topoisomerase 3 from Caenorhabditis elegans.